Consider the following 292-residue polypeptide: Secreted frizzled-related protein 2 (292 aa).

Residues 1–20 (MPRRLCALLLLASQCLGSTA) form the signal peptide. Positions 32–152 (YKRSNCKPIP…PKDNDLCIPL (121 aa)) constitute an FZ domain. Intrachain disulfides connect C37–C100, C47–C93, C84–C122, C111–C149, C115–C139, C169–C242, and C187–C292. The 124-residue stretch at 169–292 (CDACKNKNED…FSRSIRKLQC (124 aa)) folds into the NTR domain.

Belongs to the secreted frizzled-related protein (sFRP) family.

It localises to the secreted. In terms of biological role, soluble frizzled-related proteins (sFRPS) function as modulators of Wnt signaling through direct interaction with Wnts. They have a role in regulating cell growth and differentiation in specific cell types. SFRP2 appears to be associated with myogenesis. The polypeptide is Secreted frizzled-related protein 2 (SFRP2) (Gallus gallus (Chicken)).